The sequence spans 404 residues: Glutamyl-tRNA reductase (404 aa).

Residues 47 to 50 (TCNR), Ser94, 99 to 101 (EQE), and Gln105 each bind substrate. Residue Cys48 is the Nucleophile of the active site. Residue 174–179 (GAGEMG) participates in NADP(+) binding.

As to quaternary structure, homotetramer.

It carries out the reaction (S)-4-amino-5-oxopentanoate + tRNA(Glu) + NADP(+) = L-glutamyl-tRNA(Glu) + NADPH + H(+). The protein operates within porphyrin-containing compound metabolism; protoporphyrin-IX biosynthesis; 5-aminolevulinate from L-glutamyl-tRNA(Glu): step 1/2. Inhibited by heavy metal compounds, Zn(2+), and heme. Also competitively inhibited by glutamycin. Its function is as follows. Catalyzes the NADPH-dependent reduction of glutamyl-tRNA(Glu) to glutamate 1-semialdehyde (GSA). In the absence of NADPH, exhibits substrate esterase activity, leading to the release of glutamate from tRNA. This Methanopyrus kandleri (strain AV19 / DSM 6324 / JCM 9639 / NBRC 100938) protein is Glutamyl-tRNA reductase (hemA).